A 189-amino-acid polypeptide reads, in one-letter code: Peptidyl-tRNA hydrolase (189 aa).

Residue Tyr-16 participates in tRNA binding. His-21 acts as the Proton acceptor in catalysis. TRNA is bound by residues Phe-67, Asn-69, and Asn-115.

This sequence belongs to the PTH family. In terms of assembly, monomer.

It localises to the cytoplasm. The enzyme catalyses an N-acyl-L-alpha-aminoacyl-tRNA + H2O = an N-acyl-L-amino acid + a tRNA + H(+). Its function is as follows. Hydrolyzes ribosome-free peptidyl-tRNAs (with 1 or more amino acids incorporated), which drop off the ribosome during protein synthesis, or as a result of ribosome stalling. Functionally, catalyzes the release of premature peptidyl moieties from peptidyl-tRNA molecules trapped in stalled 50S ribosomal subunits, and thus maintains levels of free tRNAs and 50S ribosomes. The chain is Peptidyl-tRNA hydrolase from Legionella pneumophila (strain Paris).